A 20-amino-acid polypeptide reads, in one-letter code: SXAAVVEPPETSQNRIAKGE.

The interval Ser-1–Glu-20 is disordered. The segment covering Glu-10–Glu-20 has biased composition (polar residues).

Dimer of 18 kDa and 60 kDa subunit.

It localises to the microsome membrane. The protein resides in the endoplasmic reticulum membrane. Its function is as follows. May have spermidine-binding activity. The chain is Putative 60 kDa spermidine-binding protein from Zea mays (Maize).